A 308-amino-acid polypeptide reads, in one-letter code: Aspartate carbamoyltransferase catalytic subunit (308 aa).

Carbamoyl phosphate contacts are provided by Arg-55 and Thr-56. Lys-83 is an L-aspartate binding site. Carbamoyl phosphate contacts are provided by Arg-105, His-133, and Gln-136. Arg-166 and Arg-220 together coordinate L-aspartate. Carbamoyl phosphate-binding residues include Gly-261 and Pro-262.

It belongs to the aspartate/ornithine carbamoyltransferase superfamily. ATCase family. Heterododecamer (2C3:3R2) of six catalytic PyrB chains organized as two trimers (C3), and six regulatory PyrI chains organized as three dimers (R2).

It carries out the reaction carbamoyl phosphate + L-aspartate = N-carbamoyl-L-aspartate + phosphate + H(+). It participates in pyrimidine metabolism; UMP biosynthesis via de novo pathway; (S)-dihydroorotate from bicarbonate: step 2/3. Catalyzes the condensation of carbamoyl phosphate and aspartate to form carbamoyl aspartate and inorganic phosphate, the committed step in the de novo pyrimidine nucleotide biosynthesis pathway. This is Aspartate carbamoyltransferase catalytic subunit from Chlorobaculum parvum (strain DSM 263 / NCIMB 8327) (Chlorobium vibrioforme subsp. thiosulfatophilum).